Reading from the N-terminus, the 898-residue chain is Phosphoenolpyruvate carboxylase (898 aa).

Residues histidine 138 and lysine 561 contribute to the active site.

This sequence belongs to the PEPCase type 1 family. Requires Mg(2+) as cofactor.

It carries out the reaction oxaloacetate + phosphate = phosphoenolpyruvate + hydrogencarbonate. Functionally, forms oxaloacetate, a four-carbon dicarboxylic acid source for the tricarboxylic acid cycle. The protein is Phosphoenolpyruvate carboxylase of Streptococcus pneumoniae serotype 4 (strain ATCC BAA-334 / TIGR4).